A 220-amino-acid polypeptide reads, in one-letter code: Deoxyribose-phosphate aldolase (220 aa).

Asp92 (proton donor/acceptor) is an active-site residue. Lys157 functions as the Schiff-base intermediate with acetaldehyde in the catalytic mechanism. The Proton donor/acceptor role is filled by Lys186.

The protein belongs to the DeoC/FbaB aldolase family. DeoC type 1 subfamily.

It localises to the cytoplasm. It catalyses the reaction 2-deoxy-D-ribose 5-phosphate = D-glyceraldehyde 3-phosphate + acetaldehyde. It participates in carbohydrate degradation; 2-deoxy-D-ribose 1-phosphate degradation; D-glyceraldehyde 3-phosphate and acetaldehyde from 2-deoxy-alpha-D-ribose 1-phosphate: step 2/2. Its function is as follows. Catalyzes a reversible aldol reaction between acetaldehyde and D-glyceraldehyde 3-phosphate to generate 2-deoxy-D-ribose 5-phosphate. This chain is Deoxyribose-phosphate aldolase, found in Caldicellulosiruptor saccharolyticus (strain ATCC 43494 / DSM 8903 / Tp8T 6331).